A 288-amino-acid chain; its full sequence is MPHVNLLVVLLILPGVFSNCLFLALYDAVSFLRRALQASLTHSAKGDAQHPRMLTAQGMLSVWRSYVLDAHKKVRLGGKAPNSSVVALGGHSSSSPSFSCAASSSSSHETPTPRTTAEAAATVTTSTTTTSTTSSTAACRLLDFARAHRPLVVNFGSASUPPFVEQLGEFCDLVRDFAGVADFLVVYIEEAHPSDAWPAPGGLEVPRHLALGDRCVAASQLRGLMPPLGRCPVVADAMDNNANIDYGVSYERLYVIQDGRIRYLGGKGPFFYRVREVKSFLESVKASR.

The Lumenal portion of the chain corresponds to M1–N5. The helical; Signal-anchor for type III membrane protein transmembrane segment at L6–Y26 threads the bilayer. At D27–R288 the chain is on the cytoplasmic side. A disordered region spans residues S99 to T130. The active site involves U160. Residue U160 is a non-standard amino acid, selenocysteine.

It belongs to the iodothyronine deiodinase family. In terms of assembly, predominantly monomer. Can form homodimers but homodimerization is not essential for enzyme activity. In terms of tissue distribution, expressed in intestine, liver, kidney and brain of immediately premetamorphic larvae, of larvae in all stages of metamorphosis and of parasitic feeding juveniles. In immediately premetamorphic larvae, levels are significantly higher in intestine and liver than in kidney and brain.

The protein localises to the endoplasmic reticulum membrane. The enzyme catalyses 3,3',5-triiodo-L-thyronine + iodide + A + H(+) = L-thyroxine + AH2. The catalysed reaction is 3,3'-diiodo-L-thyronine + iodide + A + H(+) = 3,3',5'-triiodo-L-thyronine + AH2. It carries out the reaction 3'-iodo-L-thyronine + iodide + A + H(+) = 3',5'-diiodo-L-thyronine + AH2. It catalyses the reaction 3,3'-diiodothyronamine + iodide + A + H(+) = 3,3',5'-triiodothyronamine + AH2. The enzyme catalyses 3'-iodothyronamine + iodide + A + H(+) = 3',5'-diiodothyronamine + AH2. Plays a crucial role in the metabolism of thyroid hormones (TH) and has specific roles in TH activation and inactivation by deiodination. Catalyzes the deiodination of L-thyroxine (T4) to 3,5,3'-triiodothyronine (T3), 3,3',5'-triiodothyronine (rT3) to 3,3'-diiodothyronine (3,3'-T2) and 3',5'-diiodothyronine (3',5'-T2) to 3'-monoiodothyronine (3'-T1) via outer-ring deiodination (ORD). Catalyzes the phenolic ring deiodinations of 3,3',5'-triiodothyronamine and 3',5'- diiodothyronamine. This is Type II iodothyronine deiodinase from Petromyzon marinus (Sea lamprey).